Here is a 91-residue protein sequence, read N- to C-terminus: UPF0250 protein Psyr_4360 (91 aa).

This sequence belongs to the UPF0250 family.

The protein is UPF0250 protein Psyr_4360 of Pseudomonas syringae pv. syringae (strain B728a).